The chain runs to 408 residues: Imidazolonepropionase (408 aa).

Residues His-73 and His-75 each contribute to the Fe(3+) site. Positions 73 and 75 each coordinate Zn(2+). Residues Arg-82, Tyr-145, and His-178 each contribute to the 4-imidazolone-5-propanoate site. Tyr-145 contacts N-formimidoyl-L-glutamate. His-243 serves as a coordination point for Fe(3+). His-243 is a binding site for Zn(2+). Gln-246 contributes to the 4-imidazolone-5-propanoate binding site. Fe(3+) is bound at residue Asp-318. Position 318 (Asp-318) interacts with Zn(2+). 2 residues coordinate N-formimidoyl-L-glutamate: Asn-320 and Gly-322. Residue Ser-323 coordinates 4-imidazolone-5-propanoate.

Belongs to the metallo-dependent hydrolases superfamily. HutI family. It depends on Zn(2+) as a cofactor. Requires Fe(3+) as cofactor.

The protein localises to the cytoplasm. It catalyses the reaction 4-imidazolone-5-propanoate + H2O = N-formimidoyl-L-glutamate. The protein operates within amino-acid degradation; L-histidine degradation into L-glutamate; N-formimidoyl-L-glutamate from L-histidine: step 3/3. Its function is as follows. Catalyzes the hydrolytic cleavage of the carbon-nitrogen bond in imidazolone-5-propanoate to yield N-formimidoyl-L-glutamate. It is the third step in the universal histidine degradation pathway. This chain is Imidazolonepropionase, found in Shewanella halifaxensis (strain HAW-EB4).